The primary structure comprises 38 residues: Large ribosomal subunit protein bL36 (38 aa).

Belongs to the bacterial ribosomal protein bL36 family.

In Cupriavidus metallidurans (strain ATCC 43123 / DSM 2839 / NBRC 102507 / CH34) (Ralstonia metallidurans), this protein is Large ribosomal subunit protein bL36.